A 727-amino-acid chain; its full sequence is Malate synthase G (727 aa).

Residues Val-117, 124 to 125 (RY), Ser-275, and Arg-312 each bind acetyl-CoA. Catalysis depends on Arg-339, which acts as the Proton acceptor. Residues Arg-339, Glu-431, and 456 to 459 (GFLD) contribute to the glyoxylate site. Positions 431 and 459 each coordinate Mg(2+). Pro-540 contributes to the acetyl-CoA binding site. The residue at position 616 (Cys-616) is a Cysteine sulfenic acid (-SOH). The active-site Proton donor is Asp-630.

The protein belongs to the malate synthase family. GlcB subfamily. As to quaternary structure, monomer. Requires Mg(2+) as cofactor.

It is found in the cytoplasm. It carries out the reaction glyoxylate + acetyl-CoA + H2O = (S)-malate + CoA + H(+). It functions in the pathway carbohydrate metabolism; glyoxylate cycle; (S)-malate from isocitrate: step 2/2. Involved in the glycolate utilization. Catalyzes the condensation and subsequent hydrolysis of acetyl-coenzyme A (acetyl-CoA) and glyoxylate to form malate and CoA. This chain is Malate synthase G, found in Halalkalibacterium halodurans (strain ATCC BAA-125 / DSM 18197 / FERM 7344 / JCM 9153 / C-125) (Bacillus halodurans).